The sequence spans 212 residues: Thymidylate kinase (212 aa).

11-18 lines the ATP pocket; that stretch reads GPEGAGKT.

This sequence belongs to the thymidylate kinase family.

It carries out the reaction dTMP + ATP = dTDP + ADP. In terms of biological role, phosphorylation of dTMP to form dTDP in both de novo and salvage pathways of dTTP synthesis. In Streptococcus pneumoniae (strain CGSP14), this protein is Thymidylate kinase.